A 351-amino-acid chain; its full sequence is 3-dehydroquinate synthase (351 aa).

NAD(+) contacts are provided by residues 60–65 (DGEEYK), 94–98 (GVISD), 118–119 (TT), lysine 131, lysine 140, and 158–161 (FLKT). Residues glutamate 173, histidine 239, and histidine 256 each contribute to the Zn(2+) site.

The protein belongs to the sugar phosphate cyclases superfamily. Dehydroquinate synthase family. Co(2+) is required as a cofactor. Requires Zn(2+) as cofactor. NAD(+) serves as cofactor.

It is found in the cytoplasm. The catalysed reaction is 7-phospho-2-dehydro-3-deoxy-D-arabino-heptonate = 3-dehydroquinate + phosphate. Its pathway is metabolic intermediate biosynthesis; chorismate biosynthesis; chorismate from D-erythrose 4-phosphate and phosphoenolpyruvate: step 2/7. Catalyzes the conversion of 3-deoxy-D-arabino-heptulosonate 7-phosphate (DAHP) to dehydroquinate (DHQ). The polypeptide is 3-dehydroquinate synthase (Campylobacter jejuni subsp. jejuni serotype O:6 (strain 81116 / NCTC 11828)).